The chain runs to 255 residues: Thiazole synthase (255 aa).

Catalysis depends on K95, which acts as the Schiff-base intermediate with DXP. 1-deoxy-D-xylulose 5-phosphate is bound by residues G156, 182–183 (AG), and 204–205 (NT).

Belongs to the ThiG family. Homotetramer. Forms heterodimers with either ThiH or ThiS.

Its subcellular location is the cytoplasm. The catalysed reaction is [ThiS sulfur-carrier protein]-C-terminal-Gly-aminoethanethioate + 2-iminoacetate + 1-deoxy-D-xylulose 5-phosphate = [ThiS sulfur-carrier protein]-C-terminal Gly-Gly + 2-[(2R,5Z)-2-carboxy-4-methylthiazol-5(2H)-ylidene]ethyl phosphate + 2 H2O + H(+). The protein operates within cofactor biosynthesis; thiamine diphosphate biosynthesis. In terms of biological role, catalyzes the rearrangement of 1-deoxy-D-xylulose 5-phosphate (DXP) to produce the thiazole phosphate moiety of thiamine. Sulfur is provided by the thiocarboxylate moiety of the carrier protein ThiS. In vitro, sulfur can be provided by H(2)S. The chain is Thiazole synthase from Aeromonas salmonicida (strain A449).